We begin with the raw amino-acid sequence, 224 residues long: Phosphoglycolate phosphatase (224 aa).

Aspartate 8 serves as the catalytic Nucleophile. The Mg(2+) site is built by aspartate 8 and aspartate 10. Substrate is bound at residue lysine 151. Mg(2+) is bound by residues aspartate 174 and aspartate 178.

Belongs to the archaeal SPP-like hydrolase family. It depends on Mg(2+) as a cofactor.

The enzyme catalyses 2-phosphoglycolate + H2O = glycolate + phosphate. In terms of biological role, catalyzes the dephosphorylation of 2-phosphoglycolate. The chain is Phosphoglycolate phosphatase from Thermoplasma volcanium (strain ATCC 51530 / DSM 4299 / JCM 9571 / NBRC 15438 / GSS1).